The sequence spans 112 residues: Protein ORF1 (112 aa).

Low complexity predominate over residues 1–10 (MEGTDWSGWG). The disordered stretch occupies residues 1-20 (MEGTDWSGWGDDSDFPWPKG). Residues 51–71 (IAFVILIVSLFVLLLGVLLAC) traverse the membrane as a helical segment.

The protein resides in the host membrane. The polypeptide is Protein ORF1 (Snake adenovirus serotype 1 (SnAdV-1)).